Here is a 408-residue protein sequence, read N- to C-terminus: Multidrug resistance protein MdtG (408 aa).

11 helical membrane-spanning segments follow: residues 16-36, 58-78, 92-112, 115-135, 146-166, 173-193, 224-244, 256-276, 290-310, 319-339, and 378-398; these read LIVA…VMPF, IVFS…GGLA, LGMG…QFLI, ALLG…ATQV, TLST…GLLA, PVFF…LFCI, LFVT…ILTL, VAFI…LSAP, ILIT…YVQT, FLLG…LVYN, and AVFL…WNSL.

Belongs to the major facilitator superfamily. DHA1 family. MdtG (TC 2.A.1.2.20) subfamily.

It is found in the cell inner membrane. Its function is as follows. Confers resistance to fosfomycin and deoxycholate. In Escherichia coli (strain 55989 / EAEC), this protein is Multidrug resistance protein MdtG.